A 198-amino-acid chain; its full sequence is Probable chemoreceptor glutamine deamidase CheD (198 aa).

It belongs to the CheD family.

It carries out the reaction L-glutaminyl-[protein] + H2O = L-glutamyl-[protein] + NH4(+). Its function is as follows. Probably deamidates glutamine residues to glutamate on methyl-accepting chemotaxis receptors (MCPs), playing an important role in chemotaxis. The chain is Probable chemoreceptor glutamine deamidase CheD from Stenotrophomonas maltophilia (strain K279a).